Consider the following 539-residue polypeptide: Chaperonin GroEL (539 aa).

ATP is bound by residues 29–32 (TLGP), 86–90 (DGTTT), glycine 413, and aspartate 494.

The protein belongs to the chaperonin (HSP60) family. As to quaternary structure, forms a cylinder of 14 subunits composed of two heptameric rings stacked back-to-back. Interacts with the co-chaperonin GroES.

The protein localises to the cytoplasm. It carries out the reaction ATP + H2O + a folded polypeptide = ADP + phosphate + an unfolded polypeptide.. Functionally, together with its co-chaperonin GroES, plays an essential role in assisting protein folding. The GroEL-GroES system forms a nano-cage that allows encapsulation of the non-native substrate proteins and provides a physical environment optimized to promote and accelerate protein folding. This Finegoldia magna (strain ATCC 29328 / DSM 20472 / WAL 2508) (Peptostreptococcus magnus) protein is Chaperonin GroEL.